The chain runs to 144 residues: MRAVVVLLLVAVASAKVYDRCELARALKASGMDGYAGNSLPNWVCLSKWESSYNTQATNRNTDGSTDYGIFQINSRYWCDDGRTPGAKNVCGIRCSQLLTADLTVAIRCAKRVVLDPNGIGAWVAWRLHCQNQDLRSYVAGCGV.

The N-terminal stretch at 1–15 (MRAVVVLLLVAVASA) is a signal peptide. Residues 16 to 144 (KVYDRCELAR…LRSYVAGCGV (129 aa)) form the C-type lysozyme domain. 4 disulfides stabilise this stretch: cysteine 21–cysteine 142, cysteine 45–cysteine 130, cysteine 79–cysteine 95, and cysteine 91–cysteine 109. Active-site residues include glutamate 50 and aspartate 67.

The protein localises to the secreted. It carries out the reaction Hydrolysis of (1-&gt;4)-beta-linkages between N-acetylmuramic acid and N-acetyl-D-glucosamine residues in a peptidoglycan and between N-acetyl-D-glucosamine residues in chitodextrins.. Its function is as follows. Lysozymes have primarily a bacteriolytic function; those in tissues and body fluids are associated with the monocyte-macrophage system and enhance the activity of immunoagents. Has antibacterial activity against the Gram positive bacterium P.citreus. Has no antibacterial activity against the Gram negative bacteria E.coli and Y.ruckeri. Does not have hemolytic activity against trout erythrocytes. In Oncorhynchus mykiss (Rainbow trout), this protein is Lysozyme C II.